A 445-amino-acid polypeptide reads, in one-letter code: MDIKQVTETIAMIEEQNFDVRTITMGISLLDCIDSNIEKAAEKVYHKIVTKAGKLVQVGDDISAELGIPIVNKRVSVTPISIIGAATDATDYVPLAKALDRAAKEIGVNFIGGFSALVQKGYQKGDEILINSIPKALAETDFVCSSVNIGSTKSGINMTAVRDMGRIIKETSAASEMGPAKLVVFANAVEDNPFMAGAFHGVGEADVVINVGVSGPGVVKRALEKVRGQSFDVVAETVKKTAFKITRIGQLVGSLASERLGVKFGIVDLSLAPTPAVGDSVARVLEEMGLETIGTHGTTAALALLNDQVKKGGVMACNQVGGLSGAFIPVSEDEGMIAAVQEGALNLEKLEAMTAICSVGLDMIAIPANTPDTTIAAMIADEAAIGVINQKTTAVRIIPKGKEGDMIEFGGLLGYAPVMPVNKKSSADFIARGGQIPAPIHSFKN.

Belongs to the UPF0210 family. As to quaternary structure, homodimer.

The protein is UPF0210 protein SMU_73 of Streptococcus mutans serotype c (strain ATCC 700610 / UA159).